A 410-amino-acid chain; its full sequence is Dipeptidase ataJ (410 aa).

H27, D29, and E138 together coordinate Zn(2+). Substrate is bound at residue H165. The segment at 180-200 (TSSPWSEYGGQTHDPGDEPSR) is disordered. 2 residues coordinate substrate: R258 and D318.

It belongs to the metallo-dependent hydrolases superfamily. Peptidase M19 family. Zn(2+) serves as cofactor.

It catalyses the reaction an L-aminoacyl-L-amino acid + H2O = 2 an L-alpha-amino acid. Its pathway is mycotoxin biosynthesis. Its function is as follows. Dipeptidase; part of the gene cluster that mediates the biosynthesis of acetylaranotin, a member of the epipolythiodioxopiperazine (ETP) class of toxins characterized by a disulfide-bridged cyclic dipeptide. The first step of acetylaranotin biosynthesis is performed by the NRPS ataP which produces diketopiperazine cyclo-L-Phe-L-Phe via the condensation of 2 phenylalanines (L-Phe). The ataC domain of ataTC then catalyzes the formation of bishydroxylation of cyclo-L-Phe-L-Phe. The glutathione S-transferase domain ataG in ataIMG further catalyzes the conjugation of two glutathiones to the bishydroxylated intermediate. Next, the dipeptidase ataJ removes the Glu residues. The following step is performed by the carbon sulfur lyase domain ataI of ataIMG which may convert the bis-cysteinyl adduct to yield an epidithiol intermediate. The ataT domain from ataTC then catalyzes the oxidation of the free dithiols, followed by a cyclization step catalyzed by the cytochrome P450 ataF. AtaF probably acts as an epoxidase to promote a dual epoxidation formation at C8 and C9 along with C8' and C9', followed by the spontaneous nucleophilic attack of the amide nitrogens N10 and N10' to yield an intermediate with the pyrrolidine partial structure. The final steps of acetylaranotin biosynthesis involve the acetylation and ring rearrangement of an epitetrathiodiketopiperazine intermediate to produce acetylaranotin. AtaH probably catalyzes the acetylation of epitetrathiodiketopiperazine to produce a diacetate and ataY is responsible for the formation of the dihydrooxepin moiety that converts the diacetate intermediate to acetylaranotin via acetylapoaranotin. Both enzymes could function independently in the absence of the other. The acetylaranotin bis-thiomethyltransferase ataS located outside of acetylaranotin gene cluster is the main thiomethyltransferase responsible for converting acetylaranotin and its related intermediates to their methylated forms. The protein is Dipeptidase ataJ of Aspergillus terreus (strain NIH 2624 / FGSC A1156).